The primary structure comprises 207 residues: 2,3-bisphosphoglycerate-dependent phosphoglycerate mutase (207 aa).

Residues 10–17, 23–24, R62, 89–92, K100, 116–117, and 160–161 each bind substrate; these read RHGQSEWN, TG, ERDY, RR, and GN. The Tele-phosphohistidine intermediate role is filled by H11. E89 serves as the catalytic Proton donor/acceptor.

It belongs to the phosphoglycerate mutase family. BPG-dependent PGAM subfamily. As to quaternary structure, homodimer.

It catalyses the reaction (2R)-2-phosphoglycerate = (2R)-3-phosphoglycerate. It participates in carbohydrate degradation; glycolysis; pyruvate from D-glyceraldehyde 3-phosphate: step 3/5. In terms of biological role, catalyzes the interconversion of 2-phosphoglycerate and 3-phosphoglycerate. This chain is 2,3-bisphosphoglycerate-dependent phosphoglycerate mutase, found in Afipia carboxidovorans (strain ATCC 49405 / DSM 1227 / KCTC 32145 / OM5) (Oligotropha carboxidovorans).